The primary structure comprises 311 residues: Aldose reductase B (311 aa).

13-23 (DIHHIPMIGLG) lines the NADP(+) pocket. Tyrosine 54 acts as the Proton donor in catalysis. Histidine 116 contacts substrate. 219–273 (SPLGQGKCDLLSNETLKSIADKHNKTVANVIFKWLNQRGIVTIPKSSNPARIIEN) is a binding site for NADP(+).

The protein belongs to the aldo/keto reductase family.

It carries out the reaction an alditol + NAD(+) = an aldose + NADH + H(+). The enzyme catalyses an alditol + NADP(+) = an aldose + NADPH + H(+). Functionally, catalyzes the NADPH-dependent reduction of a wide variety of carbonyl-containing compounds to their corresponding alcohols with a broad range of catalytic efficiencies. In Dictyostelium discoideum (Social amoeba), this protein is Aldose reductase B (alrB).